The sequence spans 534 residues: ATP synthase subunit alpha 2 (534 aa).

175 to 182 (GDRQTGKT) contributes to the ATP binding site. The disordered stretch occupies residues 506-534 (FQPAPEPETAPKTKTDIKPKPKAAGGESS). Basic and acidic residues predominate over residues 514-524 (TAPKTKTDIKP).

It belongs to the ATPase alpha/beta chains family. As to quaternary structure, F-type ATPases have 2 components, CF(1) - the catalytic core - and CF(0) - the membrane proton channel. CF(1) has five subunits: alpha(3), beta(3), gamma(1), delta(1), epsilon(1). CF(0) has three main subunits: a(1), b(2) and c(9-12). The alpha and beta chains form an alternating ring which encloses part of the gamma chain. CF(1) is attached to CF(0) by a central stalk formed by the gamma and epsilon chains, while a peripheral stalk is formed by the delta and b chains.

Its subcellular location is the cell inner membrane. It carries out the reaction ATP + H2O + 4 H(+)(in) = ADP + phosphate + 5 H(+)(out). In terms of biological role, produces ATP from ADP in the presence of a proton gradient across the membrane. The alpha chain is a regulatory subunit. The chain is ATP synthase subunit alpha 2 from Albidiferax ferrireducens (strain ATCC BAA-621 / DSM 15236 / T118) (Rhodoferax ferrireducens).